We begin with the raw amino-acid sequence, 2610 residues long: E3 ubiquitin-protein ligase HECTD1 (2610 aa).

Residues Thr-246 to Asp-269 form a disordered region. A compositionally biased stretch (polar residues) spans Arg-258–Asp-269. ANK repeat units lie at residues Val-395–Arg-424, Gln-426–Leu-455, Asp-459–Lys-491, and Ile-579–Leu-612. The disordered stretch occupies residues Val-489–Asp-513. Positions Lys-491–Asn-501 are enriched in basic and acidic residues. 2 disordered regions span residues Leu-627–Gln-657 and Ser-707–Pro-748. Phosphoserine is present on residues Ser-631 and Ser-640. Basic and acidic residues predominate over residues Glu-639 to Gln-657. The span at Ser-707–Ser-717 shows a compositional bias: low complexity. The span at Ser-718–Gln-729 shows a compositional bias: basic and acidic residues. An MIB/HERC2 domain is found at Val-1266–Tyr-1338. 2 disordered regions span residues Val-1343–Arg-1406 and Glu-1433–Ile-1483. The segment covering Pro-1348–Lys-1365 has biased composition (polar residues). Low complexity-rich tracts occupy residues Ser-1373–Ser-1395 and Gly-1441–Glu-1458. Ser-1384 carries the phosphoserine modification. Residues Ser-1469–Ile-1479 show a composition bias toward polar residues. Residue Ser-1488 is modified to Phosphoserine. Residues Glu-1496–Arg-1515 are disordered. Phosphoserine is present on Ser-1567. Disordered stretches follow at residues Gly-1592–Ser-1611 and Glu-1674–Arg-1757. The span at Thr-1600 to Ser-1611 shows a compositional bias: low complexity. Residues Glu-1674–Glu-1703 show a composition bias toward acidic residues. At Thr-1760 the chain carries Phosphothreonine. Ser-1772 carries the post-translational modification Phosphoserine. The disordered stretch occupies residues Ala-1777–Pro-1797. The segment at Phe-2029 to Glu-2103 is K-box. The HECT domain occupies Ile-2151 to Asn-2610. Residues His-2297 to Ser-2318 form a disordered region. Ser-2318 carries the post-translational modification Phosphoserine. Cys-2579 serves as the catalytic Glycyl thioester intermediate.

The protein belongs to the UPL family. K-HECT subfamily. Interacts with IGSF1.

It catalyses the reaction S-ubiquitinyl-[E2 ubiquitin-conjugating enzyme]-L-cysteine + [acceptor protein]-L-lysine = [E2 ubiquitin-conjugating enzyme]-L-cysteine + N(6)-ubiquitinyl-[acceptor protein]-L-lysine.. Its pathway is protein modification; protein ubiquitination. In terms of biological role, E3 ubiquitin-protein ligase which accepts ubiquitin from an E2 ubiquitin-conjugating enzyme in the form of a thioester and then directly transfers the ubiquitin to targeted substrates. Mediates 'Lys-63'-linked polyubiquitination of HSP90AA1 which leads to its intracellular localization and reduced secretion. Negatively regulating HSP90AA1 secretion in cranial mesenchyme cells may impair their emigration and may be essential for the correct development of the cranial neural folds and neural tube closure. Catalyzes ubiquitination and degradation of ZNF622, an assembly factor for the ribosomal 60S subunit, in hematopoietic cells, thereby promoting hematopoietic stem cell renewal. This chain is E3 ubiquitin-protein ligase HECTD1, found in Homo sapiens (Human).